Reading from the N-terminus, the 70-residue chain is Protein SlyX homolog (70 aa).

This sequence belongs to the SlyX family.

The chain is Protein SlyX homolog from Shewanella sediminis (strain HAW-EB3).